A 252-amino-acid polypeptide reads, in one-letter code: Fluoroquinolones export permease protein MT2760 (252 aa).

A run of 6 helical transmembrane segments spans residues 31-51 (VMLV…TPLF), 69-89 (LILT…LAAF), 119-139 (ATVM…SGIL), 148-168 (IPIG…ILAV), 176-196 (LAMV…PWFI), and 224-244 (TWWP…WVLF).

In terms of assembly, the complex is composed of 2 ATP-binding proteins and 2 transmembrane proteins.

The protein localises to the cell membrane. Part of the ABC transporter complex involved in fluoroquinolones export. Probably responsible for the translocation of the substrate across the membrane. The chain is Fluoroquinolones export permease protein MT2760 from Mycobacterium tuberculosis (strain CDC 1551 / Oshkosh).